A 110-amino-acid polypeptide reads, in one-letter code: Large ribosomal subunit protein uL22 (110 aa).

Belongs to the universal ribosomal protein uL22 family. In terms of assembly, part of the 50S ribosomal subunit.

Its function is as follows. This protein binds specifically to 23S rRNA; its binding is stimulated by other ribosomal proteins, e.g. L4, L17, and L20. It is important during the early stages of 50S assembly. It makes multiple contacts with different domains of the 23S rRNA in the assembled 50S subunit and ribosome. The globular domain of the protein is located near the polypeptide exit tunnel on the outside of the subunit, while an extended beta-hairpin is found that lines the wall of the exit tunnel in the center of the 70S ribosome. This chain is Large ribosomal subunit protein uL22, found in Solidesulfovibrio magneticus (strain ATCC 700980 / DSM 13731 / RS-1) (Desulfovibrio magneticus).